A 327-amino-acid chain; its full sequence is Cytochrome c biogenesis protein CcsA (327 aa).

A run of 8 helical transmembrane segments spans residues 13-33, 46-66, 73-93, 101-121, 145-165, 233-253, 262-282, and 294-314; these read ISFSVVSIVLTIYFLTFLVNL, GIIITFFGITGLLFTRWIYSG, LYESLIFLAWAFSIIHMVSYF, LNAITAPSAIFIQGFAASGLL, MILGYGALLCGSLLSIALLVI, IISLGFIFLTIGILSGAVWAN, WDPKETWAFITWTIFAIYLHI, and AIVAAIGFLLIWICYFGVNLL.

It belongs to the CcmF/CycK/Ccl1/NrfE/CcsA family. May interact with Ccs1.

It is found in the plastid. The protein localises to the chloroplast thylakoid membrane. Functionally, required during biogenesis of c-type cytochromes (cytochrome c6 and cytochrome f) at the step of heme attachment. This is Cytochrome c biogenesis protein CcsA from Lobularia maritima (Sweet alyssum).